The following is a 362-amino-acid chain: Probable protein phosphatase 2C 11 (362 aa).

The 307-residue stretch at 23–329 (KLGLSSMQGW…DNMTMVLVQF (307 aa)) folds into the PPM-type phosphatase domain. Asp57, Gly58, Asp272, and Asp320 together coordinate Mn(2+).

The protein belongs to the PP2C family. The cofactor is Mg(2+). It depends on Mn(2+) as a cofactor.

The enzyme catalyses O-phospho-L-seryl-[protein] + H2O = L-seryl-[protein] + phosphate. It carries out the reaction O-phospho-L-threonyl-[protein] + H2O = L-threonyl-[protein] + phosphate. The sequence is that of Probable protein phosphatase 2C 11 from Oryza sativa subsp. japonica (Rice).